The primary structure comprises 256 residues: Peroxisomal membrane protein PMP30B (256 aa).

This sequence belongs to the peroxin-11 family.

It is found in the peroxisome membrane. Functionally, involved in peroxisomal proliferation. Could participate in peroxisomal elongation or fission. May be involved in parceling of peroxisomes into regular quanta. The sequence is that of Peroxisomal membrane protein PMP30B (PEX11B) from Candida boidinii (Yeast).